Reading from the N-terminus, the 432-residue chain is Glutamate-1-semialdehyde 2,1-aminomutase (432 aa).

Lys267 carries the post-translational modification N6-(pyridoxal phosphate)lysine.

This sequence belongs to the class-III pyridoxal-phosphate-dependent aminotransferase family. HemL subfamily. As to quaternary structure, homodimer. It depends on pyridoxal 5'-phosphate as a cofactor.

Its subcellular location is the cytoplasm. The enzyme catalyses (S)-4-amino-5-oxopentanoate = 5-aminolevulinate. It participates in porphyrin-containing compound metabolism; protoporphyrin-IX biosynthesis; 5-aminolevulinate from L-glutamyl-tRNA(Glu): step 2/2. This is Glutamate-1-semialdehyde 2,1-aminomutase from Rhodococcus erythropolis (strain PR4 / NBRC 100887).